Consider the following 24-residue polypeptide: Iron-regulated 31 kDa protein (24 aa).

It localises to the periplasm. In terms of biological role, may be involved in iron uptake. The sequence is that of Iron-regulated 31 kDa protein from Haemophilus influenzae.